The following is a 271-amino-acid chain: Type III pantothenate kinase (271 aa).

Residue 5–12 coordinates ATP; it reads DISNSVTK. Substrate-binding positions include tyrosine 85 and 92–95; that span reads GADR. The active-site Proton acceptor is aspartate 94. K(+) is bound at residue aspartate 114. Threonine 117 is an ATP binding site. Threonine 169 is a binding site for substrate.

This sequence belongs to the type III pantothenate kinase family. Homodimer. Requires NH4(+) as cofactor. The cofactor is K(+).

The protein localises to the cytoplasm. The catalysed reaction is (R)-pantothenate + ATP = (R)-4'-phosphopantothenate + ADP + H(+). It functions in the pathway cofactor biosynthesis; coenzyme A biosynthesis; CoA from (R)-pantothenate: step 1/5. Catalyzes the phosphorylation of pantothenate (Pan), the first step in CoA biosynthesis. This Methylacidiphilum infernorum (isolate V4) (Methylokorus infernorum (strain V4)) protein is Type III pantothenate kinase.